Reading from the N-terminus, the 152-residue chain is MSRFVFILLCFIPYLGRADCWDKAGERYNIPSSLLKAIAEKESGFNKFAVNVNNNGSKDYGIMQINDFHSKRLREMGYSEEMLISHPCLSVHYAAKLLNEFMMMYGRGWEAVGAYNAGTSPKKKKERLKYAEDIYRRYLRIAAESKQNNRRI.

A signal peptide spans 1-17; the sequence is MSRFVFILLCFIPYLGR.

It belongs to the IagB/IpgF/P19 family.

This Shigella sonnei protein is Protein IpgF (ipgF).